Reading from the N-terminus, the 630-residue chain is Mitochondrial Rho GTPase 1 (630 aa).

In terms of domain architecture, Miro 1 spans 1-168 (MKEVRVVICG…FYMCRACVIY (168 aa)). At 1–598 (MKEVRVVICG…EEDSNKTNYQ (598 aa)) the chain is on the cytoplasmic side. GTP contacts are provided by residues 10–17 (GDQGVGKS), 57–61 (DTQSD), and 113–116 (NKSE). 2 EF-hand domains span residues 184–219 (ATIH…CFSK) and 304–339 (KGYR…TPGL). The Ca(2+) site is built by Asp-197, Asn-199, Asp-201, Glu-208, Asp-317, Asp-319, Asp-321, and Glu-328. One can recognise a Miro 2 domain in the interval 419–579 (RNVFLCFVVG…FIQLAESAQY (161 aa)). Residues 428-435 (GSKSCGKT), 459-463 (EFQST), and 527-530 (TKAD) contribute to the GTP site. The chain crosses the membrane as a helical; Anchor for type IV membrane protein span at residues 599–619 (LVAALTAFGALLLSVGGSLTW). Topologically, residues 620–630 (KIIKHQYYSKK) are mitochondrial intermembrane.

This sequence belongs to the mitochondrial Rho GTPase family.

The protein resides in the mitochondrion outer membrane. Its function is as follows. Mitochondrial GTPase involved in mitochondrial trafficking. Probably involved in control of anterograde transport of mitochondria and their subcellular distribution. The chain is Mitochondrial Rho GTPase 1 (gem1) from Schizosaccharomyces pombe (strain 972 / ATCC 24843) (Fission yeast).